Reading from the N-terminus, the 470-residue chain is Cysteine--tRNA ligase (470 aa).

C46 provides a ligand contact to Zn(2+). A 'HIGH' region motif is present at residues 48 to 58 (PTVYDLAHIGN). Zn(2+) is bound by residues C230, H255, and E259. The 'KMSKS' region motif lies at 288–292 (KMSKS). Position 291 (K291) interacts with ATP.

Belongs to the class-I aminoacyl-tRNA synthetase family. Monomer. Zn(2+) is required as a cofactor.

It localises to the cytoplasm. It catalyses the reaction tRNA(Cys) + L-cysteine + ATP = L-cysteinyl-tRNA(Cys) + AMP + diphosphate. The chain is Cysteine--tRNA ligase from Granulibacter bethesdensis (strain ATCC BAA-1260 / CGDNIH1).